A 227-amino-acid polypeptide reads, in one-letter code: Uracil-DNA glycosylase (227 aa).

The active-site Proton acceptor is Asp65.

The protein belongs to the uracil-DNA glycosylase (UDG) superfamily. UNG family.

The protein localises to the cytoplasm. The enzyme catalyses Hydrolyzes single-stranded DNA or mismatched double-stranded DNA and polynucleotides, releasing free uracil.. Excises uracil residues from the DNA which can arise as a result of misincorporation of dUMP residues by DNA polymerase or due to deamination of cytosine. This is Uracil-DNA glycosylase from Lactobacillus delbrueckii subsp. bulgaricus (strain ATCC 11842 / DSM 20081 / BCRC 10696 / JCM 1002 / NBRC 13953 / NCIMB 11778 / NCTC 12712 / WDCM 00102 / Lb 14).